The chain runs to 95 residues: Aspartyl/glutamyl-tRNA(Asn/Gln) amidotransferase subunit C (95 aa).

The protein belongs to the GatC family. As to quaternary structure, heterotrimer of A, B and C subunits.

It catalyses the reaction L-glutamyl-tRNA(Gln) + L-glutamine + ATP + H2O = L-glutaminyl-tRNA(Gln) + L-glutamate + ADP + phosphate + H(+). The enzyme catalyses L-aspartyl-tRNA(Asn) + L-glutamine + ATP + H2O = L-asparaginyl-tRNA(Asn) + L-glutamate + ADP + phosphate + 2 H(+). Its function is as follows. Allows the formation of correctly charged Asn-tRNA(Asn) or Gln-tRNA(Gln) through the transamidation of misacylated Asp-tRNA(Asn) or Glu-tRNA(Gln) in organisms which lack either or both of asparaginyl-tRNA or glutaminyl-tRNA synthetases. The reaction takes place in the presence of glutamine and ATP through an activated phospho-Asp-tRNA(Asn) or phospho-Glu-tRNA(Gln). The protein is Aspartyl/glutamyl-tRNA(Asn/Gln) amidotransferase subunit C of Pelodictyon phaeoclathratiforme (strain DSM 5477 / BU-1).